The sequence spans 215 residues: Leucyl/phenylalanyl-tRNA--protein transferase (215 aa).

It belongs to the L/F-transferase family.

The protein localises to the cytoplasm. The enzyme catalyses N-terminal L-lysyl-[protein] + L-leucyl-tRNA(Leu) = N-terminal L-leucyl-L-lysyl-[protein] + tRNA(Leu) + H(+). It carries out the reaction N-terminal L-arginyl-[protein] + L-leucyl-tRNA(Leu) = N-terminal L-leucyl-L-arginyl-[protein] + tRNA(Leu) + H(+). The catalysed reaction is L-phenylalanyl-tRNA(Phe) + an N-terminal L-alpha-aminoacyl-[protein] = an N-terminal L-phenylalanyl-L-alpha-aminoacyl-[protein] + tRNA(Phe). Functionally, functions in the N-end rule pathway of protein degradation where it conjugates Leu, Phe and, less efficiently, Met from aminoacyl-tRNAs to the N-termini of proteins containing an N-terminal arginine or lysine. The protein is Leucyl/phenylalanyl-tRNA--protein transferase of Campylobacter jejuni (strain RM1221).